Here is a 532-residue protein sequence, read N- to C-terminus: Putative cysteine desulfurase PbSufS (532 aa).

An N-terminal signal peptide occupies residues 1–18 (MNNESICILLLLFVKITS). Position 286 is an N6-(pyridoxal phosphate)lysine (Lys286). The active-site Cysteine persulfide intermediate is the Cys480.

This sequence belongs to the class-V pyridoxal-phosphate-dependent aminotransferase family. Csd subfamily. Monomer. Interacts with SufE; interaction enhances cysteine desulfurase activity of SufS. Requires pyridoxal 5'-phosphate as cofactor.

It localises to the plastid. The protein resides in the apicoplast. It carries out the reaction (sulfur carrier)-H + L-cysteine = (sulfur carrier)-SH + L-alanine. Its pathway is cofactor biosynthesis; iron-sulfur cluster biosynthesis. In terms of biological role, catalyzes sulfur activation and mobilization in sulfur mobilization (SUF) pathway for iron-sulfur (Fe-S) cluster biogenesis. Active when in complex with a partner protein SufE. Required for apicoplast maintenance. Plays a role in the development of sporozoites in oocysts in mosquitoes. The chain is Putative cysteine desulfurase PbSufS from Plasmodium berghei (strain Anka).